The primary structure comprises 120 residues: Large ribosomal subunit protein bL17 (120 aa).

The protein belongs to the bacterial ribosomal protein bL17 family. In terms of assembly, part of the 50S ribosomal subunit. Contacts protein L32.

The protein is Large ribosomal subunit protein bL17 of Bacillus licheniformis (strain ATCC 14580 / DSM 13 / JCM 2505 / CCUG 7422 / NBRC 12200 / NCIMB 9375 / NCTC 10341 / NRRL NRS-1264 / Gibson 46).